The chain runs to 563 residues: Putative cysteine ligase BshC (563 aa).

Residues 474–506 (LEQSLMGTSKQAEKALDTLRQKTQRANRRKHDE) are a coiled coil.

Belongs to the BshC family.

The polypeptide is Putative cysteine ligase BshC (Prosthecochloris aestuarii (strain DSM 271 / SK 413)).